Reading from the N-terminus, the 410-residue chain is Regulator of microtubule dynamics protein 2 (410 aa).

The helical transmembrane segment at 10-27 (IFGIMVGTAGISLLLLWY) threads the bilayer. Phosphoserine is present on S51. Positions 68–110 (FQERQLQILEKLNELLTNMEELKEEIRFLKETVPKLEEYIQDE) form a coiled coil. S121 is subject to Phosphoserine. Basic residues predominate over residues 122-131 (PQHRARKRRL). The interval 122-151 (PQHRARKRRLPTIQSSATSNSSEEAESEGG) is disordered. T139 is subject to Phosphothreonine. At Y152 the chain carries Phosphotyrosine. A phosphothreonine mark is found at T154 and T157.

It belongs to the RMDN family. Interacts with microtubules.

It localises to the membrane. Its subcellular location is the cytoplasm. It is found in the cytoskeleton. The protein localises to the spindle. The protein resides in the spindle pole. The sequence is that of Regulator of microtubule dynamics protein 2 (RMDN2) from Macaca fascicularis (Crab-eating macaque).